Here is a 416-residue protein sequence, read N- to C-terminus: Tumor necrosis factor receptor superfamily member 19 (416 aa).

Residues 1-29 (MALKVLPLHRTVLFAAILFLLHLACKVSC) form the signal peptide. Topologically, residues 30 to 170 (ETGDCRQQEF…TVSSPRDTAL (141 aa)) are extracellular. TNFR-Cys repeat units follow at residues 33-72 (DCRQQEFKDRSGNCVLCKQCGPGMELSKECGFGYGEDAQC) and 74-114 (PCRP…DAVC). Disulfide bonds link C34–C46, C49–C62, C52–C72, C75–C89, C92–C106, C95–C114, C117–C135, and C138–C149. The N-linked (GlcNAc...) asparagine glycan is linked to N105. The TNFR-Cys 3; truncated repeat unit spans residues 116–149 (DCLPGFYRKTKLVGFQDMECVPCGDPPPPYEPHC). Residues 171–191 (AAVICSALATVLLALLILCVI) form a helical membrane-spanning segment. Over 192–416 (YCKRQFMEKK…LAMPTAFQDA (225 aa)) the chain is Cytoplasmic. The segment at 321 to 416 (LCDSYPELTG…LAMPTAFQDA (96 aa)) is disordered. Polar residues-rich tracts occupy residues 331–351 (EDTNSLNPENESAASLDSSGG), 360–370 (LESSGNVSEST), and 381–396 (VWEQTLAQDAQRTPSQ).

In terms of assembly, associates with TRAF1, TRAF2, TRAF3 and TRAF5. Interacts with LINGO1. In terms of tissue distribution, highly expressed in adult brain, and in embryos from day 11-17, but not earlier. Detected in embryonic brain and epithelium, and at lower levels in adult heart, lung and liver. In neonatal mice, mainly in hair follicles and neuron-like cells in the cerebellum, but not in the skin epidermis. Isoform 3 was found in embryonic day 17.5 skin but not in brain and liver.

It is found in the cell membrane. The protein resides in the secreted. Its function is as follows. Can mediate activation of c-Jun and NF-kappa-B. May promote caspase-independent cell death. Isoform 2 and isoform 3 may act as decoy receptors. This Mus musculus (Mouse) protein is Tumor necrosis factor receptor superfamily member 19 (Tnfrsf19).